A 338-amino-acid polypeptide reads, in one-letter code: Fructose-1,6-bisphosphatase class 1 1 (338 aa).

Residues E91, D113, L115, and D116 each coordinate Mg(2+). Substrate contacts are provided by residues 116–119 (DGSS), N208, and K274. Position 280 (E280) interacts with Mg(2+).

The protein belongs to the FBPase class 1 family. As to quaternary structure, homotetramer. The cofactor is Mg(2+).

It localises to the cytoplasm. The catalysed reaction is beta-D-fructose 1,6-bisphosphate + H2O = beta-D-fructose 6-phosphate + phosphate. The protein operates within carbohydrate biosynthesis; gluconeogenesis. The sequence is that of Fructose-1,6-bisphosphatase class 1 1 from Cupriavidus necator (strain ATCC 17699 / DSM 428 / KCTC 22496 / NCIMB 10442 / H16 / Stanier 337) (Ralstonia eutropha).